Consider the following 300-residue polypeptide: Tyrosine recombinase XerC (300 aa).

The region spanning 2–88 is the Core-binding (CB) domain; it reads TQEGQLEKRF…SLRSFYTFLL (87 aa). The 186-residue stretch at 109-294 folds into the Tyr recombinase domain; that stretch reads RLPKFFYSEE…TKEHLKSTYM (186 aa). Active-site residues include Arg150, Lys174, His246, Arg249, and His272. Tyr281 (O-(3'-phospho-DNA)-tyrosine intermediate) is an active-site residue.

This sequence belongs to the 'phage' integrase family. XerC subfamily. As to quaternary structure, forms a cyclic heterotetrameric complex composed of two molecules of XerC and two molecules of XerD.

It localises to the cytoplasm. In terms of biological role, site-specific tyrosine recombinase, which acts by catalyzing the cutting and rejoining of the recombining DNA molecules. The XerC-XerD complex is essential to convert dimers of the bacterial chromosome into monomers to permit their segregation at cell division. It also contributes to the segregational stability of plasmids. The polypeptide is Tyrosine recombinase XerC (Listeria innocua serovar 6a (strain ATCC BAA-680 / CLIP 11262)).